A 466-amino-acid polypeptide reads, in one-letter code: Cysteine--tRNA ligase (466 aa).

Position 28 (Cys-28) interacts with Zn(2+). The 'HIGH' region motif lies at 30–40 (PTVYNYIHIGN). 3 residues coordinate Zn(2+): Cys-208, His-233, and Glu-237. The short motif at 265 to 269 (KMSKS) is the 'KMSKS' region element. Lys-268 lines the ATP pocket.

This sequence belongs to the class-I aminoacyl-tRNA synthetase family. As to quaternary structure, monomer. Zn(2+) serves as cofactor.

It localises to the cytoplasm. It catalyses the reaction tRNA(Cys) + L-cysteine + ATP = L-cysteinyl-tRNA(Cys) + AMP + diphosphate. The sequence is that of Cysteine--tRNA ligase from Staphylococcus aureus (strain MRSA252).